The following is a 764-amino-acid chain: Putative wall-associated receptor kinase-like 13 (764 aa).

An N-terminal signal peptide occupies residues 1–26 (MRGNKNYYFLSLLYFLSLPILHFSSC). The Extracellular portion of the chain corresponds to 27-379 (THKCGDIQIP…HRCIDYHIPE (353 aa)). 8 N-linked (GlcNAc...) asparagine glycosylation sites follow: N78, N114, N121, N164, N233, N238, N259, and N283. The tract at residues 308 to 372 (CTCDNHIASG…CINTSGGHRC (65 aa)) is atypical EGF-like. 3 disulfide bridges follow: C310-C323, C345-C363, and C352-C372. Residue N365 is glycosylated (N-linked (GlcNAc...) asparagine). The chain crosses the membrane as a helical span at residues 380 to 400 (VMLGLGAGFFVLIVGGGIWWW). At 401 to 764 (RKLLRKRRMT…SGSTEIARSM (364 aa)) the chain is on the cytoplasmic side. Positions 454 to 728 (FNDNRVIGQG…REVSTALERI (275 aa)) constitute a Protein kinase domain. ATP contacts are provided by residues 460-468 (IGQGGQGTV) and K482. Phosphotyrosine is present on Y527. The active-site Proton acceptor is D579. Phosphothreonine is present on residues T613 and T618. Position 626 is a phosphotyrosine (Y626).

The protein belongs to the protein kinase superfamily. Ser/Thr protein kinase family.

The protein resides in the membrane. The catalysed reaction is L-seryl-[protein] + ATP = O-phospho-L-seryl-[protein] + ADP + H(+). It carries out the reaction L-threonyl-[protein] + ATP = O-phospho-L-threonyl-[protein] + ADP + H(+). Putative serine/threonine-protein kinase that may function as a signaling receptor of extracellular matrix component. The protein is Putative wall-associated receptor kinase-like 13 (WAKL13) of Arabidopsis thaliana (Mouse-ear cress).